A 171-amino-acid chain; its full sequence is Superoxide dismutase [Cu-Zn] 2 (171 aa).

A signal peptide spans 1-20 (MKKLSGVLAGSLLLISASFS). Positions 67, 69, and 85 each coordinate Cu cation. A disulfide bond links Cys74 and Cys167. Zn(2+)-binding residues include His85, His93, His102, and Asp105. His147 is a Cu cation binding site.

It belongs to the Cu-Zn superoxide dismutase family. Requires Cu cation as cofactor. Zn(2+) is required as a cofactor.

It catalyses the reaction 2 superoxide + 2 H(+) = H2O2 + O2. Its function is as follows. Destroys radicals which are normally produced within the cells and which are toxic to biological systems. The sequence is that of Superoxide dismutase [Cu-Zn] 2 (sodC2) from Aquifex aeolicus (strain VF5).